The following is a 1207-amino-acid chain: Disease resistance protein RPP2B (1207 aa).

The TIR domain maps to 15–180; it reads CEFDVFVSFR…EIVKNTFRML (166 aa). The active site involves E89. An NB-ARC domain is found at 201–445; sequence ELEKLLMFDN…FLDIACFFRS (245 aa). LRR repeat units lie at residues 607 to 630, 653 to 676, 677 to 699, 720 to 743, 744 to 767, 769 to 791, 792 to 815, 840 to 862, and 863 to 886; these read PKEL…EKNT, AKNL…VKQM, NELI…GFKI, SESI…IESL, HSLI…LYKL, SLQE…KEKM, ECLE…CLSN, NSFL…KFSS, and LRSL…IEKL.

It belongs to the disease resistance TIR-NB-LRR family.

It carries out the reaction NAD(+) + H2O = ADP-D-ribose + nicotinamide + H(+). Disease resistance protein that cooperates with RPP2A to confer resistance to Hyaloperonospora parasitica isolate Cala2. The sequence is that of Disease resistance protein RPP2B from Arabidopsis thaliana (Mouse-ear cress).